The following is a 500-amino-acid chain: Prostacyclin synthase (500 aa).

The chain crosses the membrane as a helical span at residues 1-20 (MSWAVVFGLLAALLLLLLLT). Substrate contacts are provided by residues R106, L112, N287, 358-359 (TR), and R382. Residue C441 coordinates heme.

It belongs to the cytochrome P450 family. The cofactor is heme.

The protein localises to the endoplasmic reticulum membrane. It catalyses the reaction prostaglandin H2 = prostaglandin I2. It carries out the reaction a hydroperoxyeicosatetraenoate = an oxoeicosatetraenoate + H2O. The enzyme catalyses (15S)-hydroperoxy-(5Z,8Z,11Z,13E)-eicosatetraenoate = 15-oxo-(5Z,8Z,11Z,13E)-eicosatetraenoate + H2O. The catalysed reaction is (15S)-hydroperoxy-(5Z,8Z,11Z,13E)-eicosatetraenoate + AH2 = (15S)-hydroxy-(5Z,8Z,11Z,13E)-eicosatetraenoate + A + H2O. Its function is as follows. Catalyzes the biosynthesis and metabolism of eicosanoids. Catalyzes the isomerization of prostaglandin H2 to prostacyclin (= prostaglandin I2), a potent mediator of vasodilation and inhibitor of platelet aggregation. Additionally, displays dehydratase activity, toward hydroperoxyeicosatetraenoates (HPETEs), especially toward (15S)-hydroperoxy-(5Z,8Z,11Z,13E)-eicosatetraenoate (15(S)-HPETE). The sequence is that of Prostacyclin synthase (PTGIS) from Bos taurus (Bovine).